Consider the following 287-residue polypeptide: Pyridoxal 5'-phosphate synthase subunit PdxS (287 aa).

D21 contributes to the D-ribose 5-phosphate binding site. K78 functions as the Schiff-base intermediate with D-ribose 5-phosphate in the catalytic mechanism. G150 is a D-ribose 5-phosphate binding site. R162 is a D-glyceraldehyde 3-phosphate binding site. D-ribose 5-phosphate contacts are provided by residues G211 and 232–233 (GS).

The protein belongs to the PdxS/SNZ family. In the presence of PdxT, forms a dodecamer of heterodimers.

The enzyme catalyses aldehydo-D-ribose 5-phosphate + D-glyceraldehyde 3-phosphate + L-glutamine = pyridoxal 5'-phosphate + L-glutamate + phosphate + 3 H2O + H(+). It functions in the pathway cofactor biosynthesis; pyridoxal 5'-phosphate biosynthesis. Functionally, catalyzes the formation of pyridoxal 5'-phosphate from ribose 5-phosphate (RBP), glyceraldehyde 3-phosphate (G3P) and ammonia. The ammonia is provided by the PdxT subunit. Can also use ribulose 5-phosphate and dihydroxyacetone phosphate as substrates, resulting from enzyme-catalyzed isomerization of RBP and G3P, respectively. This is Pyridoxal 5'-phosphate synthase subunit PdxS from Tropheryma whipplei (strain Twist) (Whipple's bacillus).